Here is a 1119-residue protein sequence, read N- to C-terminus: MADTEGTSSSIPTSTNSSRHRASRGRGGRFRQAPRQVGANTADNLDAAPLMNPRGGHRGGSGNKRGRGQKEATSASRLQMQPEANFTFNPNAATFNPAQSVLFDPSVPPPTIGASTHSNQNSRQQEPSQNRRRRGGQQNTQRRQLEIQEQRGDSHPQNQSRQNNRNQLNVDRIANQQNKSVQNPSRNPGNSRRGQGARRREQKEEPLTEEETKILADKPLREGLVYLLENNKYECAICYTRITTRQGVWSCKTCYHIFHISTGCITDWARSSRDKEGANTWRCPTCQTENETMPYNYYCFCGRMRNPNFRVGEVPHSCGETCGGARKFGCPHPCTELCHPGPCIECKLFTTKSCNCGKTKKSVRCGSDQEVMCETVCGKQLSCGQHNCERICHSGDCGECTVILEQDCFCGKTPKEVSCNPCAHEKYSCGSECDGMFSCGIHHCTKKCHDKECGECETGANRIRTCPCGRNTLQSLGVTRKKCTDMVPTCDSVCDKWLTCGTPGKNHHCREKCHEGPCPPCNLNTSVICRCGTSKGVIPCDEYLQIMKTTGEYLCTKRCRKKKSCGMHKCQEVCCIQDEHFCLQMCNKRLSCGIHTCENVCHAGQCRPCLQASFDEQFCHCGHTVRMPPIPCGARLPVCSQPCVRPHSCDHSVSHKCHGEQNCPPCTQLTEKMCYGGHRVRKNIPCHIDSVSCGVVCKKPLKCGVHVCQRTCHGEECEKEGEKCTKKCETIRELCEHPCALPCHEDSPCEPSPCKASVRISCECGRIKKDAPCCEVDKMILSKLEKEEEEKSESDGEEKVVKEGILKRSTSFSQLNCMKCDDECKKLERNRKVAEALEVDTDEYGMNKLAPTISFPCYLKEMVRTNIDFVKSVEKILIDLVIQILSGEAYHDTFRAHLPAMSIEKRRFVHEYANFFNIASESVDSPPKRSIVLTAVRGKSHQPLVLISDLVNYKGALKTPGPAVIRKDIMDQALSKKEETEGLMKPLRCTEKMVVRREARPMKEITAPIPLKQQNQFALLGSDVDSDDEESNVPTTSNLVSSPPKDWWKDEEEGWQKVQQKEYVVEVERDMTEDEIEAAKKLDEGPTWEDQCDEDAPATETSSAIESPAKEEPVAELLE.

The interval 1-214 (MADTEGTSSS…EPLTEEETKI (214 aa)) is disordered. Residues 7-17 (TSSSIPTSTNS) show a composition bias toward low complexity. The segment covering 18-29 (SRHRASRGRGGR) has biased composition (basic residues). The span at 84–98 (ANFTFNPNAATFNPA) shows a compositional bias: low complexity. Polar residues predominate over residues 113-128 (GASTHSNQNSRQQEPS). Positions 143–154 (RQLEIQEQRGDS) are enriched in basic and acidic residues. A compositionally biased stretch (low complexity) spans 157–167 (QNQSRQNNRNQ). Positions 174–193 (ANQQNKSVQNPSRNPGNSRR) are enriched in polar residues. Basic and acidic residues predominate over residues 198–214 (RRREQKEEPLTEEETKI). The RING-type; degenerate zinc finger occupies 235 to 287 (CAICYTRITTRQGVWSCKTCYHIFHISTGCITDWARSSRDKEGANTWRCPTCQ). 9 consecutive NF-X1-type zinc fingers follow at residues 330–348 (CPHPCTELCHPGPCIECKL), 383–402 (CGQHNCERICHSGDCGECTV), 439–458 (CGIHHCTKKCHDKECGECET), 500–523 (CGTPGKNHHCREKCHEGPCPPCNL), 565–584 (CGMHKCQEVCCIQDEHFCLQ), 592–611 (CGIHTCENVCHAGQCRPCLQ), 649–668 (CDHSVSHKCHGEQNCPPCTQ), 703–726 (CGVHVCQRTCHGEECEKEGEKCTK), and 735–756 (CEHPCALPCHEDSPCEPSPCKA). Residues 867–937 (IDFVKSVEKI…KRSIVLTAVR (71 aa)) enclose the R3H domain. Disordered stretches follow at residues 1024–1047 (VDSDDEESNVPTTSNLVSSPPKDW) and 1078–1119 (AAKK…ELLE). Polar residues predominate over residues 1032–1041 (NVPTTSNLVS). Residues 1086 to 1097 (PTWEDQCDEDAP) are compositionally biased toward acidic residues.

This sequence belongs to the NFX1 family.

The protein resides in the nucleus. May play a role in transcription regulation. This Caenorhabditis elegans protein is Transcriptional repressor NF-X1 homolog (nfx-1).